A 311-amino-acid chain; its full sequence is MFKYTLLFPGQNDINRKKILSPFFSKNKIVQSIFRESSEYIGYDIWKLIQDDPKKKLKNNKYSQLVTLVSSIAIYELWKNKQCTHPNLVIGHSLGEYTALVCSQSLKLSDAIQLIITRYKFMMEAMSKKIGLMTAIIGLNERTIRKLLKKYDYSHEVSIACINTDNQIVLSGERNSVKHINLHCKKAGAKNIINLYIHPPSHCTLMKKASKKLLYVLKHTTFKIPIYPVISSTSLKFQNSEQAIRISLAKQIYSTVRWNSIIKYIKKDIFIFLEVSTKSILTNLNKNIIKKSLSISLNCQANFLKALKIIL.

Residues Ser-93 and His-202 contribute to the active site.

This sequence belongs to the FabD family.

It catalyses the reaction holo-[ACP] + malonyl-CoA = malonyl-[ACP] + CoA. It functions in the pathway lipid metabolism; fatty acid biosynthesis. The chain is Malonyl CoA-acyl carrier protein transacylase (fabD) from Buchnera aphidicola subsp. Baizongia pistaciae (strain Bp).